Consider the following 91-residue polypeptide: Elongation factor 1-beta (91 aa).

The protein belongs to the EF-1-beta/EF-1-delta family.

Its function is as follows. Promotes the exchange of GDP for GTP in EF-1-alpha/GDP, thus allowing the regeneration of EF-1-alpha/GTP that could then be used to form the ternary complex EF-1-alpha/GTP/AAtRNA. The polypeptide is Elongation factor 1-beta (ef1b) (Pyrococcus abyssi (strain GE5 / Orsay)).